The sequence spans 253 residues: Indole-3-glycerol phosphate synthase (253 aa).

It belongs to the TrpC family.

The enzyme catalyses 1-(2-carboxyphenylamino)-1-deoxy-D-ribulose 5-phosphate + H(+) = (1S,2R)-1-C-(indol-3-yl)glycerol 3-phosphate + CO2 + H2O. Its pathway is amino-acid biosynthesis; L-tryptophan biosynthesis; L-tryptophan from chorismate: step 4/5. The polypeptide is Indole-3-glycerol phosphate synthase (Bacillus thuringiensis subsp. konkukian (strain 97-27)).